We begin with the raw amino-acid sequence, 910 residues long: DNA mismatch repair protein MutS (910 aa).

615–622 (GPNMAGKS) serves as a coordination point for ATP.

Belongs to the DNA mismatch repair MutS family.

Its function is as follows. This protein is involved in the repair of mismatches in DNA. It is possible that it carries out the mismatch recognition step. This protein has a weak ATPase activity. The sequence is that of DNA mismatch repair protein MutS from Clostridium perfringens (strain ATCC 13124 / DSM 756 / JCM 1290 / NCIMB 6125 / NCTC 8237 / Type A).